The chain runs to 457 residues: Peptidyl-prolyl cis-trans isomerase FKBP5 (457 aa).

M1 carries the N-acetylmethionine modification. Positions 1-11 (MTTDEGAKNSR) are enriched in basic and acidic residues. Residues 1–27 (MTTDEGAKNSRENPTATVAEQGEDVTS) form a disordered region. K28 carries the post-translational modification N6-acetyllysine. PPIase FKBP-type domains follow at residues 50-138 (GDKV…LDFK) and 165-251 (GARV…KSFE). TPR repeat units lie at residues 268-301 (AAIVKEKGTLYFKGGKYVQAVIQYGKIVSWLEME), 317-350 (LAAFLNLAMCYLKLREYTKAVECCDKALGLDSAN), and 351-384 (EKGLYRRGEAQLLMNEFESAKGDFEKVLEVNPQN). The tract at residues 423-457 (EEANKAMSKKTSEGVTNEKLAVSHAVEEEKPEGHV) is disordered. S445 is subject to Phosphoserine. The segment covering 447 to 457 (AVEEEKPEGHV) has biased composition (basic and acidic residues).

In terms of assembly, part of a heteromultimeric cytoplasmic complex with HSP90AA1, HSPA1A/HSPA1B and steroid receptors. Upon ligand binding dissociates from the complex and FKBP4 takes its place. Interacts with functionally mature heterooligomeric progesterone receptor complexes along with HSP90 and TEBP. Interacts with NR3C1. Interacts with Akt/AKT1 and PHLPP1; enhancing dephosphorylation and subsequent activation of Akt/AKT1. Interacts with IFI44L; this interaction modulates the kinase activity of IKBKB and IKBKE. Interacts with IKBKB and IKBKE. In terms of processing, acetylation impairs ability to promote interaction between Akt/AKT1 and PHLPP1. Deacetylation by SIRT7 promotes interaction between Akt/AKT1 and PHLPP1, leading to suppress Akt/AKT1 activation. Post-translationally, ubiquitinated, leading to degradation in a proteasome-dependent manner. Deubiquitinated by USP49, leading to stabilization.

It localises to the cytoplasm. It is found in the nucleus. It catalyses the reaction [protein]-peptidylproline (omega=180) = [protein]-peptidylproline (omega=0). Its activity is regulated as follows. Inhibited by both FK506 and rapamycin. Immunophilin protein with PPIase and co-chaperone activities. Component of unligated steroid receptors heterocomplexes through interaction with heat-shock protein 90 (HSP90). Plays a role in the intracellular trafficking of heterooligomeric forms of steroid hormone receptors maintaining the complex into the cytoplasm when unliganded. Acts as a regulator of Akt/AKT1 activity by promoting the interaction between Akt/AKT1 and PHLPP1, thereby enhancing dephosphorylation and subsequent activation of Akt/AKT1. Interacts with IKBKE and IKBKB which facilitates IKK complex assembly leading to increased IKBKE and IKBKB kinase activity, NF-kappaB activation, and IFN production. This chain is Peptidyl-prolyl cis-trans isomerase FKBP5 (FKBP5), found in Aotus nancymaae (Ma's night monkey).